The primary structure comprises 310 residues: tRNA dimethylallyltransferase (310 aa).

11–18 (GPTAVGKT) is a binding site for ATP. 13–18 (TAVGKT) serves as a coordination point for substrate. The tract at residues 36 to 39 (DSMQ) is interaction with substrate tRNA.

Belongs to the IPP transferase family. Monomer. The cofactor is Mg(2+).

The enzyme catalyses adenosine(37) in tRNA + dimethylallyl diphosphate = N(6)-dimethylallyladenosine(37) in tRNA + diphosphate. In terms of biological role, catalyzes the transfer of a dimethylallyl group onto the adenine at position 37 in tRNAs that read codons beginning with uridine, leading to the formation of N6-(dimethylallyl)adenosine (i(6)A). The chain is tRNA dimethylallyltransferase from Shouchella clausii (strain KSM-K16) (Alkalihalobacillus clausii).